A 132-amino-acid chain; its full sequence is Small ribosomal subunit protein uS19 (132 aa).

This sequence belongs to the universal ribosomal protein uS19 family.

Its function is as follows. Protein S19 forms a complex with S13 that binds strongly to the 16S ribosomal RNA. The polypeptide is Small ribosomal subunit protein uS19 (Korarchaeum cryptofilum (strain OPF8)).